Reading from the N-terminus, the 200-residue chain is dTDP-4-dehydrorhamnose 3,5-epimerase (200 aa).

Substrate-binding positions include Arg21, Glu26, 45–47, and Arg57; that span reads QVN. Residue His60 is the Proton acceptor of the active site. Positions 70 and 116 each coordinate substrate. Catalysis depends on Tyr129, which acts as the Proton donor. Residues Glu140 and Lys165 each contribute to the substrate site.

This sequence belongs to the dTDP-4-dehydrorhamnose 3,5-epimerase family.

The enzyme catalyses dTDP-4-dehydro-6-deoxy-alpha-D-glucose = dTDP-4-dehydro-beta-L-rhamnose. It participates in carbohydrate biosynthesis; dTDP-L-rhamnose biosynthesis. It functions in the pathway antibiotic biosynthesis; streptomycin biosynthesis. Involved in the biosynthesis of the dihydrostreptose moiety of streptomycin. Catalyzes the epimerization of the C3' and C5'positions of dTDP-6-deoxy-D-xylo-4-hexulose, forming dTDP-6-deoxy-L-lyxo-4-hexulose. In Streptomyces griseus, this protein is dTDP-4-dehydrorhamnose 3,5-epimerase.